Reading from the N-terminus, the 684-residue chain is Fidgetin-like protein 2 (684 aa).

The segment covering Pro-27–Ala-41 has biased composition (polar residues). Disordered stretches follow at residues Pro-27–Ser-48, Pro-99–Ser-179, and Leu-292–Met-403. Low complexity predominate over residues Ser-160 to Ser-179. Ala-431 lines the ATP pocket.

Belongs to the AAA ATPase family. It depends on Mg(2+) as a cofactor. In terms of tissue distribution, highly expressed in vascular endothelial cells and neuronal cells.

It localises to the cytoplasm. The protein resides in the cell cortex. The catalysed reaction is ATP + H2O = ADP + phosphate + H(+). In terms of biological role, microtubule-severing enzyme that negatively regulates cell migration and wound healing. In migrating cells, targets dynamic microtubules (MTs) at the leading edge and severs them, thereby suppressing motility. Negative regulator of axon regeneration that suppresses axonal growth by selectively severing dynamic MTs in the distal axon shaft and growth cone. Contributes to proper cell branching during endothelial and neuronal development. This Danio rerio (Zebrafish) protein is Fidgetin-like protein 2 (fignl2).